We begin with the raw amino-acid sequence, 91 residues long: Acylphosphatase (91 aa).

Positions 4-91 constitute an Acylphosphatase-like domain; that stretch reads RYLIKVLGRV…DNEKSFKIVY (88 aa). Catalysis depends on residues Arg-19 and Asn-37.

Belongs to the acylphosphatase family.

The catalysed reaction is an acyl phosphate + H2O = a carboxylate + phosphate + H(+). This Clostridium acetobutylicum (strain ATCC 824 / DSM 792 / JCM 1419 / IAM 19013 / LMG 5710 / NBRC 13948 / NRRL B-527 / VKM B-1787 / 2291 / W) protein is Acylphosphatase (acyP).